We begin with the raw amino-acid sequence, 58 residues long: Ranakinin-N (58 aa).

The signal sequence occupies residues 1 to 22 (MFTMKKSLLLLFFLGTISMSLC). Positions 23–43 (EEKRDADEEETEGEAKMEDIK) are excised as a propeptide. A disordered region spans residues 25–58 (KRDADEEETEGEAKMEDIKRAEAVPPGFTPFRKP). Positions 35 to 46 (GEAKMEDIKRAE) are enriched in basic and acidic residues.

Expressed by the skin glands.

It is found in the secreted. Functionally, induces contraction of intestinal smooth muscle in isolated guinea pig ileum. May induce relaxation of arterial smooth muscle. May target bradykinin receptors (BDKRB). Lacks antibacterial activity against the Gram-positive bacterium S.aureus and the Gram-negative bacteria E.coli and B.dysenteria, and antifungal activity against C.albicans. The polypeptide is Ranakinin-N (Hylarana nigrovittata (Black-striped frog)).